The sequence spans 277 residues: Myelin proteolipid protein (277 aa).

The Cytoplasmic portion of the chain corresponds to methionine 1–cysteine 10. S-palmitoyl cysteine attachment occurs at residues cysteine 6, cysteine 7, and cysteine 10. A helical transmembrane segment spans residues leucine 11–glycine 36. Residues histidine 37–glutamate 59 are Extracellular-facing. A helical membrane pass occupies residues tyrosine 60–alanine 88. The Cytoplasmic segment spans residues glutamate 89–lysine 151. Cysteine 109 carries the S-palmitoyl cysteine lipid modification. Serine 114 is modified (phosphoserine). A phosphothreonine mark is found at threonine 116 and threonine 118. 2 S-palmitoyl cysteine lipidation sites follow: cysteine 139 and cysteine 141. Residues phenylalanine 152–phenylalanine 178 form a helical membrane-spanning segment. The Extracellular portion of the chain corresponds to asparagine 179 to histidine 238. Cystine bridges form between cysteine 184/cysteine 228 and cysteine 201/cysteine 220. Residue threonine 199 is the site of O-palmitoyl threonine attachment. Residues leucine 239–leucine 268 traverse the membrane as a helical segment. Residues lysine 269–phenylalanine 277 are Cytoplasmic-facing.

This sequence belongs to the myelin proteolipid protein family. Interacts with MAL.

The protein resides in the cell membrane. The protein localises to the myelin membrane. Its function is as follows. This is the major myelin protein from the central nervous system. It plays an important role in the formation or maintenance of the multilamellar structure of myelin. The chain is Myelin proteolipid protein (PLP1) from Oryctolagus cuniculus (Rabbit).